Consider the following 268-residue polypeptide: WUSCHEL-related homeobox 12 (268 aa).

A compositionally biased stretch (polar residues) spans 1–16 (MNQEGASHSPSSTSTE). Disordered stretches follow at residues 1 to 22 (MNQE…RARW) and 173 to 198 (SDHN…QNSN). The homeobox; WUS-type DNA-binding region spans 17–81 (PVRARWSPKP…NRRSRSRRRH (65 aa)).

Belongs to the WUS homeobox family.

It localises to the nucleus. Its function is as follows. Transcription factor which may be involved in developmental processes. This chain is WUSCHEL-related homeobox 12 (WOX12), found in Arabidopsis thaliana (Mouse-ear cress).